Consider the following 1083-residue polypeptide: Ubiquitin carboxyl-terminal hydrolase 28 (1083 aa).

Residues 60-82 (DQRVKEPSHDTAATEPSEVEESA) form a disordered region. Position 67 is a phosphoserine (Ser67). Residues 97-116 (DNKDDLQAAIALSLLESPNI) enclose the UIM domain. A Glycyl lysine isopeptide (Lys-Gly) (interchain with G-Cter in SUMO2) cross-link involves residue Lys99. A USP domain is found at 162–656 (VGLKNVGNTC…SAYCLMYIND (495 aa)). Residue Cys171 is the Nucleophile of the active site. At Ser376 the chain carries Phosphoserine. Positions 483–539 (DLTAKESSSPKSCSQNAEGSFSSPEDALPNSEVMNGPFTSPHSSLEMPAPPPAPRTV) are disordered. Positions 487–505 (KESSSPKSCSQNAEGSFSS) are enriched in polar residues. Ser556 is subject to Phosphoserine. The active-site Proton acceptor is the His606. The interval 703–728 (EEQSCKIPQMESSPNSSSQDFSTSQE) is disordered. The span at 714 to 728 (SSPNSSSQDFSTSQE) shows a compositional bias: low complexity. Ser720 is modified (phosphoserine). Position 1054 is a phosphothreonine (Thr1054).

This sequence belongs to the peptidase C19 family. USP28 subfamily. Interacts with ZNF304. Interacts with PRKD1. Interacts with TP53BP1. Interacts with FBXW7; following DNA damage, dissociates from FBXW7 leading to degradation of MYC. Post-translationally, degraded upon nickel ion level or hypoxia exposure. Phosphorylated upon DNA damage at Ser-67 and Ser-720, by ATM or ATR. Phosphorylated by PRKD1.

It localises to the nucleus. The protein resides in the nucleoplasm. It catalyses the reaction Thiol-dependent hydrolysis of ester, thioester, amide, peptide and isopeptide bonds formed by the C-terminal Gly of ubiquitin (a 76-residue protein attached to proteins as an intracellular targeting signal).. In terms of biological role, deubiquitinase involved in DNA damage response checkpoint and MYC proto-oncogene stability. Involved in DNA damage induced apoptosis by specifically deubiquitinating proteins of the DNA damage pathway such as CLSPN. Also involved in G2 DNA damage checkpoint, by deubiquitinating CLSPN, and preventing its degradation by the anaphase promoting complex/cyclosome (APC/C). In contrast, it does not deubiquitinate PLK1. Specifically deubiquitinates MYC in the nucleoplasm, leading to prevent MYC degradation by the proteasome: acts by specifically interacting with FBXW7 (FBW7alpha) in the nucleoplasm and counteracting ubiquitination of MYC by the SCF(FBXW7) complex. Deubiquitinates ZNF304, hence preventing ZNF304 degradation by the proteasome and leading to the activated KRAS-mediated promoter hypermethylation and transcriptional silencing of tumor suppressor genes (TSGs) in a subset of colorectal cancers (CRC) cells. This chain is Ubiquitin carboxyl-terminal hydrolase 28 (Usp28), found in Rattus norvegicus (Rat).